We begin with the raw amino-acid sequence, 353 residues long: C-C chemokine receptor type 8 (353 aa).

The Extracellular segment spans residues 1 to 33; that stretch reads MDYTMEPNVTMTDYYPDFFTAPCDAEFLLRGSM. N8 carries N-linked (GlcNAc...) asparagine glycosylation. The chain crosses the membrane as a helical span at residues 34–61; sequence LYLAILYCVLFVLGLLGNSLVILVLVGC. The Cytoplasmic segment spans residues 62-71; it reads KKLRSITDIY. Residues 72 to 91 traverse the membrane as a helical segment; it reads LLNLAASDLLFVLSIPFQTH. Topologically, residues 92–105 are extracellular; the sequence is NLLDQWVFGTAMCK. C104 and C181 are joined by a disulfide. The chain crosses the membrane as a helical span at residues 106–127; sequence VVSGLYYIGFFSSMFFITLMSV. At 128–144 the chain is on the cytoplasmic side; that stretch reads DRYLAIVHAVYAIKVRT. Residues 145–169 form a helical membrane-spanning segment; the sequence is ASVGTALSLTVWLAAVTATIPLMVF. The Extracellular segment spans residues 170–200; it reads YQVASEDGMLQCFQFYEEQSLRWKLFTHFEI. Residues 201–220 form a helical membrane-spanning segment; sequence NALGLLLPFAILLFCYVRIL. Residues 221–236 lie on the Cytoplasmic side of the membrane; that stretch reads QQLRGCLNHNRTRAIK. A helical transmembrane segment spans residues 237–261; sequence LVLTVVIVSLLFWVPFNVALFLTSL. The Extracellular portion of the chain corresponds to 262–278; the sequence is HDLHILDGCATRQRLAL. A helical membrane pass occupies residues 279–302; it reads AIHVTEVISFTHCCVNPVIYAFIG. Over 303–353 the chain is Cytoplasmic; that stretch reads EKFKKHLMDVFQKSCSHIFLYLGRQMPVGALERQLSSNQRSSHSSTLDDIL.

It belongs to the G-protein coupled receptor 1 family. In terms of tissue distribution, expressed in thymus.

Its subcellular location is the cell membrane. Receptor for the CCL1/SCY1/TCA-3 chemokine. The sequence is that of C-C chemokine receptor type 8 (Ccr8) from Mus musculus (Mouse).